The chain runs to 313 residues: Type II restriction enzyme BsuMI component YdiR (313 aa).

The interval 289-313 is disordered; sequence FVSGDIVDENATTSSDDLPEDFENN.

In terms of assembly, bsuMI restriction activity requires YdiR, YdiS and YdjA.

It catalyses the reaction Endonucleolytic cleavage of DNA to give specific double-stranded fragments with terminal 5'-phosphates.. A P subtype restriction enzyme that recognizes the double-stranded sequence 5'-CTCGAG-3'; the cleavage site is unknown. The chain is Type II restriction enzyme BsuMI component YdiR (ydiR) from Bacillus subtilis (strain 168).